The following is a 123-amino-acid chain: Large ribosomal subunit protein bL21 (123 aa).

This sequence belongs to the bacterial ribosomal protein bL21 family. In terms of assembly, part of the 50S ribosomal subunit. Contacts protein L20.

This protein binds to 23S rRNA in the presence of protein L20. In Rippkaea orientalis (strain PCC 8801 / RF-1) (Cyanothece sp. (strain PCC 8801)), this protein is Large ribosomal subunit protein bL21.